The chain runs to 310 residues: D-apiose import binding protein (310 aa).

Positions 1–21 are cleaved as a signal peptide; the sequence is MKLLKASLVALSLAASTFVYA. Residues N35, 111-112, 158-160, R164, N214, D239, and Q260 contribute to the D-apiofuranose site; these read DR and DTN.

It belongs to the bacterial solute-binding protein 2 family.

The protein localises to the periplasm. Part of an ABC transporter complex involved in D-apiose import. Binds D-apiose, D-ribose and D-ribulose. This is D-apiose import binding protein from Actinobacillus succinogenes (strain ATCC 55618 / DSM 22257 / CCUG 43843 / 130Z).